A 519-amino-acid chain; its full sequence is FAD-dependent monooxygenase macF (519 aa).

Residues 1–20 (MTKMTSIIGILMGVLTTATA) form the signal peptide. In terms of domain architecture, FAD-binding PCMH-type spans 88–262 (CRLNASCIVT…TEYDLTTNTG (175 aa)). At histidine 125 the chain carries Pros-8alpha-FAD histidine.

Belongs to the oxygen-dependent FAD-linked oxidoreductase family.

It functions in the pathway secondary metabolite biosynthesis; terpenoid biosynthesis. In terms of biological role, FAD-dependent monooxygenase; part of the gene cluster that mediates the biosynthesis of macrophorins, isoprenoid epoxycyclohexenones containing cyclized drimane moieties. The first step of the pathway is the synthesis of 6-methylsalicylic acid (6-MSA) by the polyketide synthase macA. 6-MSA is then converted to m-cresol by the decarboxylase macB. The cytochrome P450 monooxygenase macC then catalyzes the oxidation of m-cresol to toluquinol. Epoxidation of toluquinol is then performed by the short chain dehydrogenase macD, with the help of macE, and a further prenylation by macG leads to 7-deacetoxyyanuthone A. The next step is the hydroxylation of C-22 of 7-deacetoxyyanuthone A by the cytochrome P450 monooxygenase macH to yield 22-deacetylyanuthone A. O-Mevalon transferase macI then attaches mevalon to the hydroxyl group of 22-deacetylyanuthone A to produce yanuthone E. The terpene cyclase macJ catalyzes the cyclization of 22-deacetylyanuthone A to macrophorin A. MacJ is also able to catalyze cyclization of yanuthone E and 7-deacetoxyyanuthone A to their corresponding macrophorins. The macJ products can be further modified by macH and macJ, as well as by the FAD-dependent monooxygenase macF, to produce additional macrophorins, including 4'-oxomacrophorin A, 4'-oxomacrophorin D and 4'-oxomacrophorin E. This Penicillium terrestre protein is FAD-dependent monooxygenase macF.